Here is a 315-residue protein sequence, read N- to C-terminus: Ribosomal protein L11 methyltransferase (315 aa).

Positions 164, 185, 207, and 249 each coordinate S-adenosyl-L-methionine.

This sequence belongs to the methyltransferase superfamily. PrmA family.

It is found in the cytoplasm. The enzyme catalyses L-lysyl-[protein] + 3 S-adenosyl-L-methionine = N(6),N(6),N(6)-trimethyl-L-lysyl-[protein] + 3 S-adenosyl-L-homocysteine + 3 H(+). Functionally, methylates ribosomal protein L11. The polypeptide is Ribosomal protein L11 methyltransferase (Lactobacillus gasseri (strain ATCC 33323 / DSM 20243 / BCRC 14619 / CIP 102991 / JCM 1131 / KCTC 3163 / NCIMB 11718 / NCTC 13722 / AM63)).